We begin with the raw amino-acid sequence, 313 residues long: tRNA(Ile)-lysidine synthase (313 aa).

37–42 (SGGPDS) serves as a coordination point for ATP.

It belongs to the tRNA(Ile)-lysidine synthase family.

The protein localises to the cytoplasm. It catalyses the reaction cytidine(34) in tRNA(Ile2) + L-lysine + ATP = lysidine(34) in tRNA(Ile2) + AMP + diphosphate + H(+). In terms of biological role, ligates lysine onto the cytidine present at position 34 of the AUA codon-specific tRNA(Ile) that contains the anticodon CAU, in an ATP-dependent manner. Cytidine is converted to lysidine, thus changing the amino acid specificity of the tRNA from methionine to isoleucine. The protein is tRNA(Ile)-lysidine synthase of Corynebacterium efficiens (strain DSM 44549 / YS-314 / AJ 12310 / JCM 11189 / NBRC 100395).